A 543-amino-acid polypeptide reads, in one-letter code: UBP9-binding protein bun62 (543 aa).

Serine 43 carries the post-translational modification Phosphoserine. 5 WD repeats span residues 239 to 279 (LNSS…QPLH), 320 to 361 (FSKS…DVFH), 362 to 401 (SYFA…LVAR), 404 to 448 (GHKS…IHRP), and 513 to 542 (VDDS…TWQR).

As to quaternary structure, interacts with ubp9 and bun107.

The protein localises to the nucleus. It is found in the cytoplasm. Its subcellular location is the cell tip. Functionally, required for the ubp9 recruitment to septa and cell tips but also for its enzymatic activity at these specific locations. The protein is UBP9-binding protein bun62 (bun62) of Schizosaccharomyces pombe (strain 972 / ATCC 24843) (Fission yeast).